The following is a 395-amino-acid chain: NAD(P)H-quinone oxidoreductase subunit H, chloroplastic (395 aa).

The protein belongs to the complex I 49 kDa subunit family. In terms of assembly, NDH is composed of at least 16 different subunits, 5 of which are encoded in the nucleus.

The protein localises to the plastid. Its subcellular location is the chloroplast thylakoid membrane. The enzyme catalyses a plastoquinone + NADH + (n+1) H(+)(in) = a plastoquinol + NAD(+) + n H(+)(out). It catalyses the reaction a plastoquinone + NADPH + (n+1) H(+)(in) = a plastoquinol + NADP(+) + n H(+)(out). In terms of biological role, NDH shuttles electrons from NAD(P)H:plastoquinone, via FMN and iron-sulfur (Fe-S) centers, to quinones in the photosynthetic chain and possibly in a chloroplast respiratory chain. The immediate electron acceptor for the enzyme in this species is believed to be plastoquinone. Couples the redox reaction to proton translocation, and thus conserves the redox energy in a proton gradient. The protein is NAD(P)H-quinone oxidoreductase subunit H, chloroplastic of Dioscorea elephantipes (Elephant's foot yam).